The chain runs to 286 residues: Pollen allergen Phl p 5a (286 aa).

A compositionally biased stretch (low complexity) spans 1-34 (ADLGYGPATPAAPAAGYTPATPAAPAGADAAGKA). Positions 1-35 (ADLGYGPATPAAPAAGYTPATPAAPAGADAAGKAT) are disordered.

It belongs to the Poa p IX/Phl p VI allergen family.

The protein localises to the secreted. The protein is Pollen allergen Phl p 5a of Phleum pratense (Common timothy).